The sequence spans 145 residues: Large ribosomal subunit protein uL13 (145 aa).

It belongs to the universal ribosomal protein uL13 family. As to quaternary structure, part of the 50S ribosomal subunit.

Its function is as follows. This protein is one of the early assembly proteins of the 50S ribosomal subunit, although it is not seen to bind rRNA by itself. It is important during the early stages of 50S assembly. The chain is Large ribosomal subunit protein uL13 from Geobacillus thermodenitrificans (strain NG80-2).